Here is a 352-residue protein sequence, read N- to C-terminus: Probable protein kinase DDB_G0291842 (352 aa).

Positions 1 to 57 (MRPLPDQSAFEDKSELVSKKQKNEDENNENRSPETPRTPKVCPKTPTKTPLRTPTKN) are disordered. Basic and acidic residues predominate over residues 10-34 (FEDKSELVSKKQKNEDENNENRSPE). Residues 38 to 56 (TPKVCPKTPTKTPLRTPTK) are compositionally biased toward low complexity. Residues 77-331 (FEYINQIGEG…IQSLLKYDKL (255 aa)) form the Protein kinase domain. ATP-binding positions include 83 to 91 (IGEGSFAKV) and lysine 106. Aspartate 207 functions as the Proton acceptor in the catalytic mechanism. Positions 212 and 225 each coordinate Mg(2+).

This sequence belongs to the protein kinase superfamily. Ser/Thr protein kinase family. WEE1 subfamily.

The enzyme catalyses L-seryl-[protein] + ATP = O-phospho-L-seryl-[protein] + ADP + H(+). It catalyses the reaction L-threonyl-[protein] + ATP = O-phospho-L-threonyl-[protein] + ADP + H(+). The protein is Probable protein kinase DDB_G0291842 of Dictyostelium discoideum (Social amoeba).